The sequence spans 641 residues: 1-deoxy-D-xylulose-5-phosphate synthase (641 aa).

Residues His71 and 112–114 (SHA) contribute to the thiamine diphosphate site. Residue Asp144 participates in Mg(2+) binding. Thiamine diphosphate-binding positions include 145–146 (GA), Asn174, Tyr285, and Glu366. A Mg(2+)-binding site is contributed by Asn174.

Belongs to the transketolase family. DXPS subfamily. In terms of assembly, homodimer. The cofactor is Mg(2+). Thiamine diphosphate serves as cofactor.

It carries out the reaction D-glyceraldehyde 3-phosphate + pyruvate + H(+) = 1-deoxy-D-xylulose 5-phosphate + CO2. It participates in metabolic intermediate biosynthesis; 1-deoxy-D-xylulose 5-phosphate biosynthesis; 1-deoxy-D-xylulose 5-phosphate from D-glyceraldehyde 3-phosphate and pyruvate: step 1/1. Catalyzes the acyloin condensation reaction between C atoms 2 and 3 of pyruvate and glyceraldehyde 3-phosphate to yield 1-deoxy-D-xylulose-5-phosphate (DXP). The protein is 1-deoxy-D-xylulose-5-phosphate synthase of Mycobacteroides abscessus (strain ATCC 19977 / DSM 44196 / CCUG 20993 / CIP 104536 / JCM 13569 / NCTC 13031 / TMC 1543 / L948) (Mycobacterium abscessus).